The chain runs to 157 residues: 2-C-methyl-D-erythritol 2,4-cyclodiphosphate synthase (157 aa).

The a divalent metal cation site is built by Asp-8 and His-10. 4-CDP-2-C-methyl-D-erythritol 2-phosphate contacts are provided by residues 8–10 and 34–35; these read DVH and HS. An a divalent metal cation-binding site is contributed by His-42. Residues 56 to 58, 132 to 135, Phe-139, and Arg-142 each bind 4-CDP-2-C-methyl-D-erythritol 2-phosphate; these read DIG and TTNE.

The protein belongs to the IspF family. In terms of assembly, homotrimer. Requires a divalent metal cation as cofactor.

It carries out the reaction 4-CDP-2-C-methyl-D-erythritol 2-phosphate = 2-C-methyl-D-erythritol 2,4-cyclic diphosphate + CMP. It participates in isoprenoid biosynthesis; isopentenyl diphosphate biosynthesis via DXP pathway; isopentenyl diphosphate from 1-deoxy-D-xylulose 5-phosphate: step 4/6. In terms of biological role, involved in the biosynthesis of isopentenyl diphosphate (IPP) and dimethylallyl diphosphate (DMAPP), two major building blocks of isoprenoid compounds. Catalyzes the conversion of 4-diphosphocytidyl-2-C-methyl-D-erythritol 2-phosphate (CDP-ME2P) to 2-C-methyl-D-erythritol 2,4-cyclodiphosphate (ME-CPP) with a corresponding release of cytidine 5-monophosphate (CMP). This is 2-C-methyl-D-erythritol 2,4-cyclodiphosphate synthase from Symbiobacterium thermophilum (strain DSM 24528 / JCM 14929 / IAM 14863 / T).